We begin with the raw amino-acid sequence, 303 residues long: Coenzyme PQQ synthesis protein B (303 aa).

This sequence belongs to the PqqB family.

Its pathway is cofactor biosynthesis; pyrroloquinoline quinone biosynthesis. May be involved in the transport of PQQ or its precursor to the periplasm. The chain is Coenzyme PQQ synthesis protein B from Pseudomonas fluorescens (strain Pf0-1).